A 1342-amino-acid polypeptide reads, in one-letter code: DNA-directed RNA polymerase subunit beta (1342 aa).

It belongs to the RNA polymerase beta chain family. The RNAP catalytic core consists of 2 alpha, 1 beta, 1 beta' and 1 omega subunit. When a sigma factor is associated with the core the holoenzyme is formed, which can initiate transcription.

The enzyme catalyses RNA(n) + a ribonucleoside 5'-triphosphate = RNA(n+1) + diphosphate. DNA-dependent RNA polymerase catalyzes the transcription of DNA into RNA using the four ribonucleoside triphosphates as substrates. This chain is DNA-directed RNA polymerase subunit beta, found in Yersinia pseudotuberculosis serotype O:1b (strain IP 31758).